A 144-amino-acid polypeptide reads, in one-letter code: EF-hand calcium-binding domain-containing protein 8 (144 aa).

EF-hand domains follow at residues 52–86 (IHLAKIEKMFEEDINSTGALGMDAFIKAMKKVLSS) and 87–122 (VSDEMLKELFLKVDSDCEGFVTWQKYVDYMMREFQG).

The chain is EF-hand calcium-binding domain-containing protein 8 (EFCAB8) from Homo sapiens (Human).